Reading from the N-terminus, the 256-residue chain is BI1-like protein (256 aa).

7 helical membrane passes run V53 to L73, P85 to Y105, L113 to M133, I138 to F158, F167 to I187, M189 to F209, and E228 to L248.

It belongs to the BI1 family.

The protein resides in the membrane. The protein is BI1-like protein of Arabidopsis thaliana (Mouse-ear cress).